Here is a 194-residue protein sequence, read N- to C-terminus: MRTRSRSTVRPLWPPPSPARFATWSHYRLRDHGDHTRPVDPRSAGTQVDDEVLEERVAYNLSKDAQLKEEARINVVAYNGKVLLIGQAPTMSASESAKNLAAGAEGVTEIYNEIRTGEKIGVGQISIDSWITTAIKSKLLANSEVKATEVKVITENGEVFLIGKLSPAQADAAAEVARNVRGVNKVIKVINYVQ.

An N-terminal signal peptide occupies residues 1–19; that stretch reads MRTRSRSTVRPLWPPPSPA. BON domains are found at residues 49–118 and 127–194; these read DDEV…RTGE and IDSW…NYVQ.

It localises to the periplasm. This chain is 21 kDa hemolysin (hly), found in Actinobacillus pleuropneumoniae (Haemophilus pleuropneumoniae).